The primary structure comprises 536 residues: Probable 1,4-beta-D-glucan cellobiohydrolase B (536 aa).

The first 21 residues, 1 to 21, serve as a signal peptide directing secretion; that stretch reads MSSFQVYRAALLLSILATANA. Residues 22 to 458 form a catalytic region; that stretch reads QQVGTYTTET…SNIKFGPIGS (437 aa). The active-site Nucleophile is the E233. E238 acts as the Proton donor in catalysis. N-linked (GlcNAc...) asparagine glycosylation is found at N351 and N414. Residues 459 to 500 form a ser/Thr-rich linker region; sequence TYSSGSSSGSGSSSSSSSTTTKATSTTLKTTSTTSSGSSSTS. Residues 464-499 form a disordered region; it reads SSSGSGSSSSSSSTTTKATSTTLKTTSTTSSGSSST. The 37-residue stretch at 500-536 folds into the CBM1 domain; that stretch reads SAAQAYGQCGGQGWTGPTTCVSGYTCTYENAYYSQCL. 2 cysteine pairs are disulfide-bonded: C508/C525 and C519/C535.

This sequence belongs to the glycosyl hydrolase 7 (cellulase C) family.

Its subcellular location is the secreted. The catalysed reaction is Hydrolysis of (1-&gt;4)-beta-D-glucosidic linkages in cellulose and cellotetraose, releasing cellobiose from the non-reducing ends of the chains.. Functionally, the biological conversion of cellulose to glucose generally requires three types of hydrolytic enzymes: (1) Endoglucanases which cut internal beta-1,4-glucosidic bonds; (2) Exocellobiohydrolases that cut the disaccharide cellobiose from the non-reducing end of the cellulose polymer chain; (3) Beta-1,4-glucosidases which hydrolyze the cellobiose and other short cello-oligosaccharides to glucose. The chain is Probable 1,4-beta-D-glucan cellobiohydrolase B (cbhB) from Aspergillus niger (strain ATCC MYA-4892 / CBS 513.88 / FGSC A1513).